Reading from the N-terminus, the 510-residue chain is Lysine--tRNA ligase (510 aa).

Residues Glu420 and Glu427 each coordinate Mg(2+).

This sequence belongs to the class-II aminoacyl-tRNA synthetase family. As to quaternary structure, homodimer. The cofactor is Mg(2+).

The protein resides in the cytoplasm. It catalyses the reaction tRNA(Lys) + L-lysine + ATP = L-lysyl-tRNA(Lys) + AMP + diphosphate. The polypeptide is Lysine--tRNA ligase (Vibrio campbellii (strain ATCC BAA-1116)).